A 164-amino-acid chain; its full sequence is R-phycoerythrin alpha chain (164 aa).

The (2R,3E)-phycoerythrobilin site is built by C82 and C139.

This sequence belongs to the phycobiliprotein family. As to quaternary structure, heterodimer of an alpha and a beta chain. Post-translationally, contains two covalently linked bilin chromophores.

Its subcellular location is the plastid. It localises to the chloroplast thylakoid membrane. Functionally, light-harvesting photosynthetic bile pigment-protein from the phycobiliprotein complex. The chain is R-phycoerythrin alpha chain (cpeA) from Pyropia haitanensis (Red seaweed).